A 487-amino-acid chain; its full sequence is Bifunctional protein GlmU (487 aa).

The interval 1–240 (MAEVTNCAAI…PEELSGVNDR (240 aa)) is pyrophosphorylase. UDP-N-acetyl-alpha-D-glucosamine-binding positions include 12-15 (LAAG), Lys26, Gln83, and 88-89 (GT). Residue Asp113 coordinates Mg(2+). Gly150, Glu165, Asn180, and Asn238 together coordinate UDP-N-acetyl-alpha-D-glucosamine. Asn238 serves as a coordination point for Mg(2+). Positions 241 to 261 (VQLAAAGRLLNRRMVEEAMRG) are linker. The tract at residues 262 to 487 (GTTIVDPDTT…DAKANDQTTN (226 aa)) is N-acetyltransferase. 2 residues coordinate UDP-N-acetyl-alpha-D-glucosamine: Arg343 and Lys361. Catalysis depends on His373, which acts as the Proton acceptor. 2 residues coordinate UDP-N-acetyl-alpha-D-glucosamine: Tyr376 and Asn387. Acetyl-CoA-binding positions include Ala390, 396 to 397 (NY), Ser415, and Ala433. The interval 449–487 (SGGKQRNIEGWVQKKRPGTPAAEAAGKAQDAKANDQTTN) is disordered.

It in the N-terminal section; belongs to the N-acetylglucosamine-1-phosphate uridyltransferase family. In the C-terminal section; belongs to the transferase hexapeptide repeat family. Homotrimer. Mg(2+) serves as cofactor.

It is found in the cytoplasm. The enzyme catalyses alpha-D-glucosamine 1-phosphate + acetyl-CoA = N-acetyl-alpha-D-glucosamine 1-phosphate + CoA + H(+). It carries out the reaction N-acetyl-alpha-D-glucosamine 1-phosphate + UTP + H(+) = UDP-N-acetyl-alpha-D-glucosamine + diphosphate. The protein operates within nucleotide-sugar biosynthesis; UDP-N-acetyl-alpha-D-glucosamine biosynthesis; N-acetyl-alpha-D-glucosamine 1-phosphate from alpha-D-glucosamine 6-phosphate (route II): step 2/2. It functions in the pathway nucleotide-sugar biosynthesis; UDP-N-acetyl-alpha-D-glucosamine biosynthesis; UDP-N-acetyl-alpha-D-glucosamine from N-acetyl-alpha-D-glucosamine 1-phosphate: step 1/1. Its pathway is bacterial outer membrane biogenesis; LPS lipid A biosynthesis. In terms of biological role, catalyzes the last two sequential reactions in the de novo biosynthetic pathway for UDP-N-acetylglucosamine (UDP-GlcNAc). The C-terminal domain catalyzes the transfer of acetyl group from acetyl coenzyme A to glucosamine-1-phosphate (GlcN-1-P) to produce N-acetylglucosamine-1-phosphate (GlcNAc-1-P), which is converted into UDP-GlcNAc by the transfer of uridine 5-monophosphate (from uridine 5-triphosphate), a reaction catalyzed by the N-terminal domain. This is Bifunctional protein GlmU from Corynebacterium aurimucosum (strain ATCC 700975 / DSM 44827 / CIP 107346 / CN-1) (Corynebacterium nigricans).